The sequence spans 262 residues: Hydroxyethylthiazole kinase (262 aa).

Methionine 43 is a substrate binding site. Residues arginine 118 and threonine 164 each contribute to the ATP site. Alanine 191 lines the substrate pocket.

It belongs to the Thz kinase family. It depends on Mg(2+) as a cofactor.

The catalysed reaction is 5-(2-hydroxyethyl)-4-methylthiazole + ATP = 4-methyl-5-(2-phosphooxyethyl)-thiazole + ADP + H(+). It participates in cofactor biosynthesis; thiamine diphosphate biosynthesis; 4-methyl-5-(2-phosphoethyl)-thiazole from 5-(2-hydroxyethyl)-4-methylthiazole: step 1/1. Its function is as follows. Catalyzes the phosphorylation of the hydroxyl group of 4-methyl-5-beta-hydroxyethylthiazole (THZ). The protein is Hydroxyethylthiazole kinase of Cereibacter sphaeroides (strain ATCC 17023 / DSM 158 / JCM 6121 / CCUG 31486 / LMG 2827 / NBRC 12203 / NCIMB 8253 / ATH 2.4.1.) (Rhodobacter sphaeroides).